Consider the following 230-residue polypeptide: Cytidylate kinase (230 aa).

Position 12 to 20 (12 to 20 (GPSGAGKGT)) interacts with ATP.

The protein belongs to the cytidylate kinase family. Type 1 subfamily.

It is found in the cytoplasm. It catalyses the reaction CMP + ATP = CDP + ADP. The catalysed reaction is dCMP + ATP = dCDP + ADP. The polypeptide is Cytidylate kinase (Aeromonas hydrophila subsp. hydrophila (strain ATCC 7966 / DSM 30187 / BCRC 13018 / CCUG 14551 / JCM 1027 / KCTC 2358 / NCIMB 9240 / NCTC 8049)).